Consider the following 504-residue polypeptide: 2,3-bisphosphoglycerate-independent phosphoglycerate mutase (504 aa).

Positions 11 and 61 each coordinate Mn(2+). Ser61 acts as the Phosphoserine intermediate in catalysis. Residues His122, 152 to 153 (RD), Arg183, Arg189, 255 to 258 (RNDR), and Lys329 each bind substrate. Mn(2+)-binding residues include Asp396, His400, Asp437, His438, and His455.

This sequence belongs to the BPG-independent phosphoglycerate mutase family. As to quaternary structure, monomer. Requires Mn(2+) as cofactor.

It catalyses the reaction (2R)-2-phosphoglycerate = (2R)-3-phosphoglycerate. It participates in carbohydrate degradation; glycolysis; pyruvate from D-glyceraldehyde 3-phosphate: step 3/5. Its function is as follows. Catalyzes the interconversion of 2-phosphoglycerate and 3-phosphoglycerate. This chain is 2,3-bisphosphoglycerate-independent phosphoglycerate mutase, found in Bacteroides thetaiotaomicron (strain ATCC 29148 / DSM 2079 / JCM 5827 / CCUG 10774 / NCTC 10582 / VPI-5482 / E50).